The primary structure comprises 584 residues: MAHVRRKVATLNMALAGSLLMVLGAQSALAQGNFSRQEAARMAHRPGVMPRGGPLFPGRSLAGVPGFPLPSIHTQQAYDPQSDFTARWTRADALQIKAHSDATVAAGQNSLPAQLTMPNIPADFPVINPDVWVWDTWTLIDKHADQFSYNGWEVIFCLTADPNAGYGFDDRHVHARIGFFYRRAGIPASRRPVNGGWTYGGHLFPDGASAQVYAGQTYTNQAEWSGSSRLMQIHGNTVSVFYTDVAFNRDANANNITPPQAIITQTLGRIHADFNHVWFTGFTAHTPLLQPDGVLYQNGAQNEFFNFRDPFTFEDPKHPGVNYMVFEGNTAGQRGVANCTEADLGFRPNDPNAETLQEVLDSGAYYQKANIGLAIATDSTLSKWKFLSPLISANCVNDQTERPQVYLHNGKYYIFTISHRTTFAAGVDGPDGVYGFVGDGIRSDFQPMNYGSGLTMGNPTDLNTAAGTDFDPSPDQNPRAFQSYSHYVMPGGLVESFIDTVENRRGGTLAPTVRVRIAQNASAVDLRYGNGGLGGYGDIPANRADVNIAGFIQDLFGQPTSGLAAQASTNNAQVLAQVRQFLNQ.

Residues 1–30 (MAHVRRKVATLNMALAGSLLMVLGAQSALA) form the signal peptide. Gln31 carries the post-translational modification Pyrrolidone carboxylic acid. Positions 134, 135, 225, 308, and 309 each coordinate sucrose. The Nucleophile role is filled by Asp135. Cys339 and Cys395 form a disulfide bridge. The active-site Proton donor/acceptor is the Glu401.

The protein belongs to the glycosyl hydrolase 68 family. Monomer. Post-translationally, the N-terminus is blocked. The N-terminal Gln is cyclized to a pyroglutamic acid.

The protein localises to the secreted. The enzyme catalyses [6)-beta-D-fructofuranosyl-(2-&gt;](n) alpha-D-glucopyranoside + sucrose = [6)-beta-D-fructofuranosyl-(2-&gt;](n+1) alpha-D-glucopyranoside + D-glucose. Its activity is regulated as follows. Strongly inhibited by Hg(2+) and slightly activated by Co(2+). Not inhibited by the metal ion chelator EDTA, suggesting that this enzyme does not need a metal cofactor. Its function is as follows. Catalyzes the synthesis of levan, a fructose polymer, by transferring the fructosyl moiety from sucrose to a growing acceptor molecule. Also displays sucrose hydrolase activity. In vitro, catalyzes transfructosylation from sucrose to a variety of acceptors including water (sucrose hydrolysis), glucose (exchange reaction), fructan (polymerase reaction) and sucrose (oligofructoside synthesis). Levansucrase of G.diazotrophicus SRT4, unlike the enzyme of B.subtilis, causes accumulation of large quantities of tri- and tetrasaccharides but small quantities of high-molecular-mass levan. It may act more as a sucrose hydrolase than as a fructan polymerase, and may be the key enzyme in the sucrose metabolism of G.diazotrophicus SRT4. This chain is Levansucrase, found in Gluconacetobacter diazotrophicus (Acetobacter diazotrophicus).